We begin with the raw amino-acid sequence, 252 residues long: Chlorophyll a-b binding protein P4, chloroplastic (252 aa).

Position 56 (tryptophan 56) interacts with chlorophyll b. Positions 76 and 95 each coordinate chlorophyll a. Arginine 100 serves as a coordination point for chlorophyll b. The next 2 membrane-spanning stretches (helical) occupy residues tryptophan 101–isoleucine 121 and tyrosine 134–isoleucine 154. Chlorophyll b contacts are provided by serine 137, valine 143, glutamate 153, and arginine 156. Residues lysine 203, glutamate 204, asparagine 207, arginine 209, glutamine 221, and histidine 236 each contribute to the chlorophyll a site.

It belongs to the light-harvesting chlorophyll a/b-binding (LHC) protein family. As to quaternary structure, the LHC complex consists of chlorophyll a-b binding proteins. The cofactor is Binds at least 14 chlorophylls (8 Chl-a and 6 Chl-b) and carotenoids such as lutein and neoxanthin.. Photoregulated by reversible phosphorylation of its threonine residues.

It is found in the plastid. It localises to the chloroplast thylakoid membrane. The light-harvesting complex (LHC) functions as a light receptor, it captures and delivers excitation energy to photosystems with which it is closely associated. In terms of biological role, may channel protons produced in the catalytic Mn center of water oxidation into the thylakoid lumen. This chain is Chlorophyll a-b binding protein P4, chloroplastic, found in Pisum sativum (Garden pea).